Reading from the N-terminus, the 199-residue chain is Putative inactive ribonuclease 11 (199 aa).

The N-terminal stretch at 1–16 (METFPLLLLSLGLVLA) is a signal peptide. N-linked (GlcNAc...) asparagine glycosylation occurs at N61. The Proton acceptor role is filled by H82. N-linked (GlcNAc...) asparagine glycosylation is found at N89 and N111. Cystine bridges form between C98–C158 and C114–C169. Substrate is bound at residue 115-119 (KWSNN).

The protein belongs to the pancreatic ribonuclease family.

It is found in the secreted. This Homo sapiens (Human) protein is Putative inactive ribonuclease 11 (RNASE11).